We begin with the raw amino-acid sequence, 190 residues long: MNEITDKNLPTLERATLGGGCFWCLEAVYQQIQGVKSVVSGYAGGARPNPSYESVCTGATGHAEIVDIEFDPKVVSFRDLLEIFFVIHNPTTLNYQGNDHGTQYRSVIYTHSDEQAKIANEVVQELEDSKIYADPVVTQIESAPTIYPAEDYHQNYFQQHPHQGYCAAVVAPKLAKFRAKFKSLIAPQYA.

The active site involves C21.

The protein belongs to the MsrA Met sulfoxide reductase family.

The catalysed reaction is L-methionyl-[protein] + [thioredoxin]-disulfide + H2O = L-methionyl-(S)-S-oxide-[protein] + [thioredoxin]-dithiol. It catalyses the reaction [thioredoxin]-disulfide + L-methionine + H2O = L-methionine (S)-S-oxide + [thioredoxin]-dithiol. Functionally, has an important function as a repair enzyme for proteins that have been inactivated by oxidation. Catalyzes the reversible oxidation-reduction of methionine sulfoxide in proteins to methionine. This chain is Peptide methionine sulfoxide reductase MsrA, found in Polynucleobacter asymbioticus (strain DSM 18221 / CIP 109841 / QLW-P1DMWA-1) (Polynucleobacter necessarius subsp. asymbioticus).